The chain runs to 149 residues: Transcriptional repressor NrdR (149 aa).

The segment at 3–34 (CPFCAAVDTKVIDSRLVGDGSQVRRRRQCLEC) is a zinc-finger region. The ATP-cone domain occupies 49–139 (PRVIKSDDIR…VYRSFEDIRE (91 aa)).

Belongs to the NrdR family. Zn(2+) is required as a cofactor.

Negatively regulates transcription of bacterial ribonucleotide reductase nrd genes and operons by binding to NrdR-boxes. This Photorhabdus laumondii subsp. laumondii (strain DSM 15139 / CIP 105565 / TT01) (Photorhabdus luminescens subsp. laumondii) protein is Transcriptional repressor NrdR.